The chain runs to 206 residues: Urease accessory protein UreG (206 aa).

14-21 (GPVGSGKT) provides a ligand contact to GTP.

It belongs to the SIMIBI class G3E GTPase family. UreG subfamily. As to quaternary structure, homodimer. UreD, UreF and UreG form a complex that acts as a GTP-hydrolysis-dependent molecular chaperone, activating the urease apoprotein by helping to assemble the nickel containing metallocenter of UreC. The UreE protein probably delivers the nickel.

The protein resides in the cytoplasm. Its function is as follows. Facilitates the functional incorporation of the urease nickel metallocenter. This process requires GTP hydrolysis, probably effectuated by UreG. This chain is Urease accessory protein UreG, found in Aliivibrio fischeri (strain ATCC 700601 / ES114) (Vibrio fischeri).